The sequence spans 872 residues: Leucine--tRNA ligase (872 aa).

The short motif at 42–52 (PYPSGNLHMGH) is the 'HIGH' region element. A 'KMSKS' region motif is present at residues 631–635 (KMSKS). Residue lysine 634 participates in ATP binding.

Belongs to the class-I aminoacyl-tRNA synthetase family.

The protein resides in the cytoplasm. The catalysed reaction is tRNA(Leu) + L-leucine + ATP = L-leucyl-tRNA(Leu) + AMP + diphosphate. This chain is Leucine--tRNA ligase, found in Blochmanniella pennsylvanica (strain BPEN).